A 594-amino-acid polypeptide reads, in one-letter code: MTLNKLRKKYIDFFKSKKHFEIMGKSLVPENDPTVLFNTAGMQPLIPYLLGEVHPSGDMLVNVQKCLRTGDIDEVGDLSHLTFFEMLGNWSLGAYFKEYSVKCSFEFLTSSDYLNIPKDSLYVSVFEGDQEIPRDTETAKVWESLGISKDRIHYLSKDHNFWGPVGSKGPCGPDTEIYVDTGKSKCSLDCNITCSCGKYFEIWNNVFMQYNKDENGNYIELGRKCVDTGMGLERTIAFLQGKSSVYDTDAFMPIIKRIEYISGKIYGQKEDDDRCIRIISDHVKAACFILADSSVVFPSNLGQGYVLRRLIRRSIRYAKKLGIKSHFLADLVDSVEAIYRSFYNELTEKKDFIKKELSKEEEKFFKTLSQGEQEFIKITRNLPSKTIPGDIAFKLYDTYGFPYEVTEELAIEYGFNVDKLGFNEHFKKHQKTSKKGGDKVFKGGLADYTYETTKLHTATHLLHKALQLVLGDHVRQKGSNITAERLRFDFVHSEKMTDDEIKKVEEIVNLQIKNSLSVKKIIMELSEAREKGAMALFGEKYDDLVSVYEIDGFSLEVCGGPHVENTNELGTFKIQKEQSSSSGIRRIKAILIDE.

Zn(2+)-binding residues include His456, His460, Cys558, and His562.

The protein belongs to the class-II aminoacyl-tRNA synthetase family. It depends on Zn(2+) as a cofactor.

Its subcellular location is the cytoplasm. It carries out the reaction tRNA(Ala) + L-alanine + ATP = L-alanyl-tRNA(Ala) + AMP + diphosphate. Catalyzes the attachment of alanine to tRNA(Ala) in a two-step reaction: alanine is first activated by ATP to form Ala-AMP and then transferred to the acceptor end of tRNA(Ala). Also edits incorrectly charged Ser-tRNA(Ala) and Gly-tRNA(Ala) via its editing domain. This Borreliella burgdorferi (strain ATCC 35210 / DSM 4680 / CIP 102532 / B31) (Borrelia burgdorferi) protein is Alanine--tRNA ligase (alaS).